The following is a 159-amino-acid chain: SsrA-binding protein (159 aa).

A compositionally biased stretch (basic and acidic residues) spans 137 to 147 (LAERQANRETE). Residues 137 to 159 (LAERQANRETEQAVGRRLKGMHD) form a disordered region.

Belongs to the SmpB family.

Its subcellular location is the cytoplasm. In terms of biological role, required for rescue of stalled ribosomes mediated by trans-translation. Binds to transfer-messenger RNA (tmRNA), required for stable association of tmRNA with ribosomes. tmRNA and SmpB together mimic tRNA shape, replacing the anticodon stem-loop with SmpB. tmRNA is encoded by the ssrA gene; the 2 termini fold to resemble tRNA(Ala) and it encodes a 'tag peptide', a short internal open reading frame. During trans-translation Ala-aminoacylated tmRNA acts like a tRNA, entering the A-site of stalled ribosomes, displacing the stalled mRNA. The ribosome then switches to translate the ORF on the tmRNA; the nascent peptide is terminated with the 'tag peptide' encoded by the tmRNA and targeted for degradation. The ribosome is freed to recommence translation, which seems to be the essential function of trans-translation. This chain is SsrA-binding protein, found in Nocardioides sp. (strain ATCC BAA-499 / JS614).